Consider the following 644-residue polypeptide: 1-deoxy-D-xylulose-5-phosphate synthase (644 aa).

Thiamine diphosphate contacts are provided by residues H78 and 120-122 (GHA). D149 contributes to the Mg(2+) binding site. Residues 150 to 151 (AA), N178, and E373 contribute to the thiamine diphosphate site. Residue N178 participates in Mg(2+) binding.

This sequence belongs to the transketolase family. DXPS subfamily. In terms of assembly, homodimer. Mg(2+) is required as a cofactor. The cofactor is thiamine diphosphate.

The catalysed reaction is D-glyceraldehyde 3-phosphate + pyruvate + H(+) = 1-deoxy-D-xylulose 5-phosphate + CO2. It functions in the pathway metabolic intermediate biosynthesis; 1-deoxy-D-xylulose 5-phosphate biosynthesis; 1-deoxy-D-xylulose 5-phosphate from D-glyceraldehyde 3-phosphate and pyruvate: step 1/1. Its function is as follows. Catalyzes the acyloin condensation reaction between C atoms 2 and 3 of pyruvate and glyceraldehyde 3-phosphate to yield 1-deoxy-D-xylulose-5-phosphate (DXP). The sequence is that of 1-deoxy-D-xylulose-5-phosphate synthase from Chlamydia caviae (strain ATCC VR-813 / DSM 19441 / 03DC25 / GPIC) (Chlamydophila caviae).